The following is a 118-amino-acid chain: D-dopachrome decarboxylase (118 aa).

Pro-2 carries the N-acetylproline modification.

This sequence belongs to the MIF family. Homotrimer.

It localises to the cytoplasm. The enzyme catalyses D-dopachrome + H(+) = 5,6-dihydroxyindole + CO2. In terms of biological role, tautomerization of D-dopachrome with decarboxylation to give 5,6-dihydroxyindole (DHI). The polypeptide is D-dopachrome decarboxylase (DDT) (Gallus gallus (Chicken)).